The chain runs to 414 residues: 2,3-diketo-5-methylthiopentyl-1-phosphate enolase (414 aa).

K99 functions as the Proton acceptor in the catalytic mechanism. Substrate contacts are provided by residues K148, 174-177, H265, G338, and 360-361; these read KDDE and GG. Mg(2+) is bound by residues K174, D176, and E177. K174 is modified (N6-carboxylysine).

It belongs to the RuBisCO large chain family. Type IV subfamily. Homodimer. Requires Mg(2+) as cofactor.

It catalyses the reaction 5-methylsulfanyl-2,3-dioxopentyl phosphate = 2-hydroxy-5-methylsulfanyl-3-oxopent-1-enyl phosphate. It participates in amino-acid biosynthesis; L-methionine biosynthesis via salvage pathway; L-methionine from S-methyl-5-thio-alpha-D-ribose 1-phosphate: step 3/6. Functionally, catalyzes the enolization of 2,3-diketo-5-methylthiopentyl-1-phosphate (DK-MTP-1-P) into 2-hydroxy-3-keto-5-methylthiopentenyl-1-phosphate (HK-MTPenyl-1-P). The protein is 2,3-diketo-5-methylthiopentyl-1-phosphate enolase of Bacillus cereus (strain ATCC 10987 / NRS 248).